Consider the following 466-residue polypeptide: Probable periplasmic serine protease do/HhoA-like (466 aa).

The signal sequence occupies residues 1–29 (MKKTRFVLNSIALGLSVLSTSFVAHVAQA). Catalysis depends on charge relay system residues His-120, Asp-150, and Ser-226. PDZ domains follow at residues 270–361 (ILEF…LRDG) and 367–458 (KMKL…LRGD).

This sequence belongs to the peptidase S1C family.

It is found in the periplasm. The sequence is that of Probable periplasmic serine protease do/HhoA-like from Haemophilus influenzae (strain ATCC 51907 / DSM 11121 / KW20 / Rd).